We begin with the raw amino-acid sequence, 956 residues long: Glutamate receptor ionotropic, kainate 4 (956 aa).

Residues 1–20 (MPRVSAPLVLLPAWLLMVAC) form the signal peptide. At 21–545 (SPHSLRIAAI…YFSFLDPFSP (525 aa)) the chain is on the extracellular side. N-linked (GlcNAc...) asparagine glycans are attached at residues Asn158, Asn220, Asn272, Asn286, Asn323, Asn408, Asn415, and Asn479. Positions 500, 502, and 507 each coordinate L-glutamate. A helical transmembrane segment spans residues 546-566 (GVWLFMLLAYLAVSCVLFLVA). Residues 567 to 623 (RLTPYEWYSPHPCAQGRCNLLVNQYSLGNSLWFPVGGFMQQGSTIAPRALSTRCVSG) are Cytoplasmic-facing. The chain crosses the membrane as a helical span at residues 624–644 (VWWAFTLIIISSYTANLAAFL). Topologically, residues 645–804 (TVQRMEVPIE…HRAKGLGMEN (160 aa)) are extracellular. L-glutamate-binding residues include Ser674, Ser675, and Glu723. Residue Asn736 is glycosylated (N-linked (GlcNAc...) asparagine). Residues 805 to 825 (IGGIFVVLICGLIVAIFMAML) form a helical membrane-spanning segment. Residues 826–956 (EFLWTLRHSE…DKTTNSSEPE (131 aa)) are Cytoplasmic-facing. Residues 931 to 956 (LRARPSPARSEESLEWDKTTNSSEPE) are disordered. Residues 939-948 (RSEESLEWDK) are compositionally biased toward basic and acidic residues.

It belongs to the glutamate-gated ion channel (TC 1.A.10.1) family. GRIK4 subfamily. In terms of assembly, homodimer. Can form functional heteromeric receptors with GRIK1, GRIK2 and GRIK3 subunits. Forms a heteromeric complex with GRIK2. In terms of tissue distribution, expressed in the hippocampus and cerebellum (at protein level).

The protein localises to the cell membrane. Its subcellular location is the postsynaptic cell membrane. The protein resides in the presynaptic cell membrane. Functionally, ionotropic glutamate receptor that functions as a cation-permeable ligand-gated ion channel. Cannot form functional channels on its own and produces channel activity only in heteromeric assembly with GRIK1, GRIK2 and GRIK3 subunits. In Mus musculus (Mouse), this protein is Glutamate receptor ionotropic, kainate 4 (Grik4).